A 428-amino-acid polypeptide reads, in one-letter code: D-amino acid dehydrogenase (428 aa).

An FAD-binding site is contributed by 3–17 (VVILGSGVVGVASAY).

The protein belongs to the DadA oxidoreductase family. FAD is required as a cofactor.

It catalyses the reaction a D-alpha-amino acid + A + H2O = a 2-oxocarboxylate + AH2 + NH4(+). It functions in the pathway amino-acid degradation; D-alanine degradation; NH(3) and pyruvate from D-alanine: step 1/1. In terms of biological role, oxidative deamination of D-amino acids. The protein is D-amino acid dehydrogenase of Burkholderia mallei (strain NCTC 10247).